Consider the following 618-residue polypeptide: Chaperone protein DnaK (618 aa).

Thr-175 carries the phosphothreonine; by autocatalysis modification. The tract at residues 576–618 (SQNAEPGADGGANSGANPGGTTGNTDTKDDNVVDAEYKVDDDK) is disordered. The segment covering 583 to 597 (ADGGANSGANPGGTT) has biased composition (gly residues). Residues 601–618 (DTKDDNVVDAEYKVDDDK) show a composition bias toward basic and acidic residues.

Belongs to the heat shock protein 70 family.

In terms of biological role, acts as a chaperone. This Clostridium kluyveri (strain NBRC 12016) protein is Chaperone protein DnaK.